We begin with the raw amino-acid sequence, 369 residues long: Probable dual-specificity RNA methyltransferase RlmN (369 aa).

Residue glutamate 108 is the Proton acceptor of the active site. In terms of domain architecture, Radical SAM core spans 114–351; sequence YPDRATLCIS…LAQGVSCTVR (238 aa). Cysteine 121 and cysteine 362 are oxidised to a cystine. The [4Fe-4S] cluster site is built by cysteine 128, cysteine 132, and cysteine 135. Residues 183–184, serine 217, 240–242, and asparagine 319 contribute to the S-adenosyl-L-methionine site; these read GE and SLH. The active-site S-methylcysteine intermediate is cysteine 362.

Belongs to the radical SAM superfamily. RlmN family. It depends on [4Fe-4S] cluster as a cofactor.

Its subcellular location is the cytoplasm. The catalysed reaction is adenosine(2503) in 23S rRNA + 2 reduced [2Fe-2S]-[ferredoxin] + 2 S-adenosyl-L-methionine = 2-methyladenosine(2503) in 23S rRNA + 5'-deoxyadenosine + L-methionine + 2 oxidized [2Fe-2S]-[ferredoxin] + S-adenosyl-L-homocysteine. It catalyses the reaction adenosine(37) in tRNA + 2 reduced [2Fe-2S]-[ferredoxin] + 2 S-adenosyl-L-methionine = 2-methyladenosine(37) in tRNA + 5'-deoxyadenosine + L-methionine + 2 oxidized [2Fe-2S]-[ferredoxin] + S-adenosyl-L-homocysteine. Its function is as follows. Specifically methylates position 2 of adenine 2503 in 23S rRNA and position 2 of adenine 37 in tRNAs. This Rhodococcus opacus (strain B4) protein is Probable dual-specificity RNA methyltransferase RlmN.